The primary structure comprises 422 residues: Dihydroorotase (422 aa).

2 residues coordinate Zn(2+): histidine 59 and histidine 61. Residues 61–63 (HFR) and asparagine 93 contribute to the substrate site. Zn(2+) is bound by residues aspartate 150, histidine 177, and histidine 230. Asparagine 276 serves as a coordination point for substrate. Residue aspartate 303 coordinates Zn(2+). Aspartate 303 is an active-site residue. Residue histidine 307 coordinates substrate.

It belongs to the metallo-dependent hydrolases superfamily. DHOase family. Class I DHOase subfamily. Zn(2+) serves as cofactor.

It catalyses the reaction (S)-dihydroorotate + H2O = N-carbamoyl-L-aspartate + H(+). It functions in the pathway pyrimidine metabolism; UMP biosynthesis via de novo pathway; (S)-dihydroorotate from bicarbonate: step 3/3. In terms of biological role, catalyzes the reversible cyclization of carbamoyl aspartate to dihydroorotate. The protein is Dihydroorotase of Streptococcus pneumoniae serotype 4 (strain ATCC BAA-334 / TIGR4).